A 166-amino-acid polypeptide reads, in one-letter code: Protein YciF (166 aa).

In terms of assembly, homodimer.

The protein is Protein YciF (yciF) of Escherichia coli (strain K12).